The sequence spans 493 residues: Glycylpeptide N-tetradecanoyltransferase (493 aa).

A disordered region spans residues 1-30 (MSDSKDSKGKAPQKPNDAEQTPGGKLTPQA). Tetradecanoyl-CoA contacts are provided by residues 82–85 (FKFW), 216–218 (LCI), and 224–228 (SKRLA). The active-site Proton acceptor; via carboxylate is the leucine 493.

This sequence belongs to the NMT family. Monomer.

The protein resides in the cytoplasm. It carries out the reaction N-terminal glycyl-[protein] + tetradecanoyl-CoA = N-tetradecanoylglycyl-[protein] + CoA + H(+). Adds a myristoyl group to the N-terminal glycine residue of certain cellular proteins. This chain is Glycylpeptide N-tetradecanoyltransferase (swoF), found in Emericella nidulans (strain FGSC A4 / ATCC 38163 / CBS 112.46 / NRRL 194 / M139) (Aspergillus nidulans).